We begin with the raw amino-acid sequence, 575 residues long: Sulfite reductase [NADPH] hemoprotein beta-component (575 aa).

4 residues coordinate [4Fe-4S] cluster: Cys-439, Cys-445, Cys-484, and Cys-488. Residue Cys-488 participates in siroheme binding.

Belongs to the nitrite and sulfite reductase 4Fe-4S domain family. As to quaternary structure, alpha(8)-beta(8). The alpha component is a flavoprotein, the beta component is a hemoprotein. Requires siroheme as cofactor. [4Fe-4S] cluster is required as a cofactor.

It carries out the reaction hydrogen sulfide + 3 NADP(+) + 3 H2O = sulfite + 3 NADPH + 4 H(+). It functions in the pathway sulfur metabolism; hydrogen sulfide biosynthesis; hydrogen sulfide from sulfite (NADPH route): step 1/1. In terms of biological role, component of the sulfite reductase complex that catalyzes the 6-electron reduction of sulfite to sulfide. This is one of several activities required for the biosynthesis of L-cysteine from sulfate. The sequence is that of Sulfite reductase [NADPH] hemoprotein beta-component from Blochmanniella pennsylvanica (strain BPEN).